Here is a 379-residue protein sequence, read N- to C-terminus: Cytochrome b (379 aa).

Transmembrane regions (helical) follow at residues 33-53 (FGSL…FLAM), 77-98 (WLIR…FIHV), 113-133 (WNIG…GYVL), and 178-198 (FFAF…VHLL). Heme b is bound by residues His83 and His97. His182 and His196 together coordinate heme b. His201 contacts a ubiquinone. Helical transmembrane passes span 226 to 246 (IKDL…ALFF), 288 to 308 (LGGV…PLLN), 320 to 340 (ITQT…WIGG), and 347 to 367 (FTMI…ILMP).

The protein belongs to the cytochrome b family. In terms of assembly, the cytochrome bc1 complex contains 11 subunits: 3 respiratory subunits (MT-CYB, CYC1 and UQCRFS1), 2 core proteins (UQCRC1 and UQCRC2) and 6 low-molecular weight proteins (UQCRH/QCR6, UQCRB/QCR7, UQCRQ/QCR8, UQCR10/QCR9, UQCR11/QCR10 and a cleavage product of UQCRFS1). This cytochrome bc1 complex then forms a dimer. Heme b is required as a cofactor.

The protein localises to the mitochondrion inner membrane. Functionally, component of the ubiquinol-cytochrome c reductase complex (complex III or cytochrome b-c1 complex) that is part of the mitochondrial respiratory chain. The b-c1 complex mediates electron transfer from ubiquinol to cytochrome c. Contributes to the generation of a proton gradient across the mitochondrial membrane that is then used for ATP synthesis. The protein is Cytochrome b (MT-CYB) of Akodon dolores (Dolorous grass mouse).